Reading from the N-terminus, the 94-residue chain is Neutrophil defensin 3 (94 aa).

A signal peptide spans 1–19; the sequence is MRTLAILAAILLVALQAQA. Positions 20-38 are excised as a propeptide; it reads EPLQARADEVAAAPEQIAA. Disulfide bonds link Cys66/Cys94, Cys68/Cys83, and Cys73/Cys93.

Belongs to the alpha-defensin family. In terms of assembly, dimer. (Microbial infection) Interacts with herpes virus 1 HHV-1 envelope glycoprotein B; this interaction inhibits viral infection.

Its subcellular location is the secreted. Functionally, effector molecule of the innate immune system that acts via antibiotic-like properties against a broad array of infectious agents including bacteria, fungi, and viruses. Possesses the ability to neutralize bacterial toxins such as B.anthracis lethal factor, Clostridium difficile cytotoxin B as well as leukocidin produced by Staphylococcus aureus. Also blocks herpes simplex virus infection by interacting with envelope glycoprotein B and thus preventing its binding to heparan sulfate, the receptor for attachment. The protein is Neutrophil defensin 3 (DEFA3) of Homo sapiens (Human).